We begin with the raw amino-acid sequence, 534 residues long: Glutamyl-tRNA(Gln) amidotransferase subunit B, mitochondrial (534 aa).

The transit peptide at 1 to 28 directs the protein to the mitochondrion; the sequence is MTVLCRLRHCHLSTPTLCRRFHDARVYK.

The protein belongs to the GatB/GatE family. GatB subfamily. As to quaternary structure, subunit of the heterotrimeric GatCAB amidotransferase (AdT) complex, composed of A, B and C subunits.

It localises to the mitochondrion. The enzyme catalyses L-glutamyl-tRNA(Gln) + L-glutamine + ATP + H2O = L-glutaminyl-tRNA(Gln) + L-glutamate + ADP + phosphate + H(+). Functionally, allows the formation of correctly charged Gln-tRNA(Gln) through the transamidation of misacylated Glu-tRNA(Gln) in the mitochondria. The reaction takes place in the presence of glutamine and ATP through an activated gamma-phospho-Glu-tRNA(Gln). In Laccaria bicolor (strain S238N-H82 / ATCC MYA-4686) (Bicoloured deceiver), this protein is Glutamyl-tRNA(Gln) amidotransferase subunit B, mitochondrial.